Here is a 448-residue protein sequence, read N- to C-terminus: Phosphoglucosamine mutase (448 aa).

Residue Ser100 is the Phosphoserine intermediate of the active site. Mg(2+) contacts are provided by Ser100, Asp240, Asp242, and Asp244. At Ser100 the chain carries Phosphoserine.

Belongs to the phosphohexose mutase family. The cofactor is Mg(2+). Post-translationally, activated by phosphorylation.

The catalysed reaction is alpha-D-glucosamine 1-phosphate = D-glucosamine 6-phosphate. Functionally, catalyzes the conversion of glucosamine-6-phosphate to glucosamine-1-phosphate. The polypeptide is Phosphoglucosamine mutase (Clostridium perfringens (strain SM101 / Type A)).